A 409-amino-acid chain; its full sequence is Tyrosine--tRNA ligase (409 aa).

The 'HIGH' region motif lies at 54 to 63; the sequence is PTAPDIHLGH. The 'KMSKS' region motif lies at 238-242; sequence KMSKS. K241 serves as a coordination point for ATP. The region spanning 347-407 is the S4 RNA-binding domain; sequence MGILHVLRAS…GKRKFARVNL (61 aa).

Belongs to the class-I aminoacyl-tRNA synthetase family. TyrS type 2 subfamily. In terms of assembly, homodimer.

Its subcellular location is the cytoplasm. It carries out the reaction tRNA(Tyr) + L-tyrosine + ATP = L-tyrosyl-tRNA(Tyr) + AMP + diphosphate + H(+). Catalyzes the attachment of tyrosine to tRNA(Tyr) in a two-step reaction: tyrosine is first activated by ATP to form Tyr-AMP and then transferred to the acceptor end of tRNA(Tyr). This is Tyrosine--tRNA ligase from Bordetella avium (strain 197N).